The primary structure comprises 619 residues: Dihydroxy-acid dehydratase (619 aa).

Aspartate 81 is a Mg(2+) binding site. Cysteine 122 contacts [2Fe-2S] cluster. The Mg(2+) site is built by aspartate 123 and lysine 124. N6-carboxylysine is present on lysine 124. Position 195 (cysteine 195) interacts with [2Fe-2S] cluster. Glutamate 494 is a Mg(2+) binding site. The active-site Proton acceptor is serine 520.

Belongs to the IlvD/Edd family. As to quaternary structure, homodimer. [2Fe-2S] cluster serves as cofactor. The cofactor is Mg(2+).

The enzyme catalyses (2R)-2,3-dihydroxy-3-methylbutanoate = 3-methyl-2-oxobutanoate + H2O. The catalysed reaction is (2R,3R)-2,3-dihydroxy-3-methylpentanoate = (S)-3-methyl-2-oxopentanoate + H2O. It participates in amino-acid biosynthesis; L-isoleucine biosynthesis; L-isoleucine from 2-oxobutanoate: step 3/4. The protein operates within amino-acid biosynthesis; L-valine biosynthesis; L-valine from pyruvate: step 3/4. In terms of biological role, functions in the biosynthesis of branched-chain amino acids. Catalyzes the dehydration of (2R,3R)-2,3-dihydroxy-3-methylpentanoate (2,3-dihydroxy-3-methylvalerate) into 2-oxo-3-methylpentanoate (2-oxo-3-methylvalerate) and of (2R)-2,3-dihydroxy-3-methylbutanoate (2,3-dihydroxyisovalerate) into 2-oxo-3-methylbutanoate (2-oxoisovalerate), the penultimate precursor to L-isoleucine and L-valine, respectively. The protein is Dihydroxy-acid dehydratase of Shewanella sp. (strain ANA-3).